The primary structure comprises 412 residues: Gamma-glutamyl phosphate reductase (412 aa).

It belongs to the gamma-glutamyl phosphate reductase family.

The protein resides in the cytoplasm. It catalyses the reaction L-glutamate 5-semialdehyde + phosphate + NADP(+) = L-glutamyl 5-phosphate + NADPH + H(+). Its pathway is amino-acid biosynthesis; L-proline biosynthesis; L-glutamate 5-semialdehyde from L-glutamate: step 2/2. In terms of biological role, catalyzes the NADPH-dependent reduction of L-glutamate 5-phosphate into L-glutamate 5-semialdehyde and phosphate. The product spontaneously undergoes cyclization to form 1-pyrroline-5-carboxylate. This is Gamma-glutamyl phosphate reductase from Actinobacillus pleuropneumoniae serotype 5b (strain L20).